The primary structure comprises 359 residues: Large ribosomal subunit protein uL3 (359 aa).

Residues 336–359 form a disordered region; that stretch reads VRPPAKRPPAEAPQITYISRESKQ.

The protein belongs to the universal ribosomal protein uL3 family. As to quaternary structure, part of the 50S ribosomal subunit. Forms a cluster with proteins L14 and L24e.

One of the primary rRNA binding proteins, it binds directly near the 3'-end of the 23S rRNA, where it nucleates assembly of the 50S subunit. The polypeptide is Large ribosomal subunit protein uL3 (Thermococcus sibiricus (strain DSM 12597 / MM 739)).